The primary structure comprises 121 residues: Large ribosomal subunit protein uL18 (121 aa).

The protein belongs to the universal ribosomal protein uL18 family. In terms of assembly, part of the 50S ribosomal subunit; part of the 5S rRNA/L5/L18/L25 subcomplex. Contacts the 5S and 23S rRNAs.

Functionally, this is one of the proteins that bind and probably mediate the attachment of the 5S RNA into the large ribosomal subunit, where it forms part of the central protuberance. The polypeptide is Large ribosomal subunit protein uL18 (Paraburkholderia phymatum (strain DSM 17167 / CIP 108236 / LMG 21445 / STM815) (Burkholderia phymatum)).